Reading from the N-terminus, the 903-residue chain is Dual 3',5'-cyclic-AMP and -GMP phosphodiesterase 11A (903 aa).

GAF domains follow at residues 175 to 324 (DLTS…GIAI) and 356 to 512 (DLEK…GLGI). Ser-378 is a 3',5'-cyclic GMP binding site. The region spanning 542 to 866 (SKTEVDKFKA…VKWEELDKKR (325 aa)) is the PDEase domain. His-618 (proton donor) is an active-site residue. His-622, His-658, Asp-659, and Asp-770 together coordinate a divalent metal cation. The segment at 863–903 (DKKRQHDHGASVPASPCSAAEGSETGGVPCCSNNTPPTHVS) is disordered. The span at 893–903 (CSNNTPPTHVS) shows a compositional bias: polar residues.

This sequence belongs to the cyclic nucleotide phosphodiesterase family. A divalent metal cation is required as a cofactor.

The protein resides in the cytoplasm. The protein localises to the cytosol. The enzyme catalyses 3',5'-cyclic GMP + H2O = GMP + H(+). The catalysed reaction is 3',5'-cyclic AMP + H2O = AMP + H(+). Plays a role in signal transduction by regulating the intracellular concentration of cyclic nucleotides cAMP and cGMP. Catalyzes the hydrolysis of both cAMP and cGMP to 5'-AMP and 5'-GMP, respectively. The protein is Dual 3',5'-cyclic-AMP and -GMP phosphodiesterase 11A (pde11a) of Takifugu rubripes (Japanese pufferfish).